A 250-amino-acid polypeptide reads, in one-letter code: ATP synthase subunit a (250 aa).

5 consecutive transmembrane segments (helical) span residues 27 to 47 (TDTVLSTAIAALIVLALAFYL), 83 to 103 (IAPFVLPLAVTIFVFILISNW), 129 to 149 (INYVLALALFVFVCYHAAGIW), 191 to 211 (IFAGGILVALIALFPPYIMWA), and 219 to 239 (FDLFVGAIQAFIFALLTILYF).

It belongs to the ATPase A chain family. F-type ATPases have 2 components, CF(1) - the catalytic core - and CF(0) - the membrane proton channel. CF(1) has five subunits: alpha(3), beta(3), gamma(1), delta(1), epsilon(1). CF(0) has three main subunits: a(1), b(2) and c(9-12). The alpha and beta chains form an alternating ring which encloses part of the gamma chain. CF(1) is attached to CF(0) by a central stalk formed by the gamma and epsilon chains, while a peripheral stalk is formed by the delta and b chains.

Its subcellular location is the cell membrane. Its function is as follows. Key component of the proton channel; it plays a direct role in the translocation of protons across the membrane. The protein is ATP synthase subunit a of Mycobacterium marinum (strain ATCC BAA-535 / M).